Here is a 262-residue protein sequence, read N- to C-terminus: tRNA (guanine-N(1)-)-methyltransferase (262 aa).

Residues Gly113 and 137-142 each bind S-adenosyl-L-methionine; that span reads IGDYVL.

Belongs to the RNA methyltransferase TrmD family. As to quaternary structure, homodimer.

It localises to the cytoplasm. The catalysed reaction is guanosine(37) in tRNA + S-adenosyl-L-methionine = N(1)-methylguanosine(37) in tRNA + S-adenosyl-L-homocysteine + H(+). Functionally, specifically methylates guanosine-37 in various tRNAs. This chain is tRNA (guanine-N(1)-)-methyltransferase, found in Saccharopolyspora erythraea (strain ATCC 11635 / DSM 40517 / JCM 4748 / NBRC 13426 / NCIMB 8594 / NRRL 2338).